Consider the following 28-residue polypeptide: SLFELGKMILQETGKNPAQSYGAYGCNC.

In terms of assembly, monomer. In terms of tissue distribution, expressed by the venom gland.

It is found in the secreted. In terms of biological role, snake venom phospholipase A2 homolog that lacks enzymatic activity. Shows high myotoxic activity, neutrophil activation (demonstrated by activation induction of IL-1beta production), and slight cytotoxicity against Jurkat (leukemia T) and SK-BR-3 (breast adenocarcinoma) tumor cell lines. A model of myotoxic mechanism has been proposed: an apo Lys49-PLA2 is activated by the entrance of a hydrophobic molecule (e.g. fatty acid) at the hydrophobic channel of the protein leading to a reorientation of a monomer. This reorientation causes a transition between 'inactive' to 'active' states, causing alignment of C-terminal and membrane-docking sites (MDoS) side-by-side and putting the membrane-disruption sites (MDiS) in the same plane, exposed to solvent and in a symmetric position for both monomers. The MDoS region stabilizes the toxin on membrane by the interaction of charged residues with phospholipid head groups. Subsequently, the MDiS region destabilizes the membrane with penetration of hydrophobic residues. This insertion causes a disorganization of the membrane, allowing an uncontrolled influx of ions (i.e. calcium and sodium), and eventually triggering irreversible intracellular alterations and cell death. The polypeptide is Basic phospholipase A2 homolog BmatTX-II (Bothrops mattogrossensis (Pitviper)).